The chain runs to 237 residues: LexA repressor (237 aa).

The segment at residues 26–46 is a DNA-binding region (H-T-H motif); the sequence is FDEMKDALDLRSKSGIHRLIT. Catalysis depends on for autocatalytic cleavage activity residues S158 and K196.

Belongs to the peptidase S24 family. Homodimer.

The catalysed reaction is Hydrolysis of Ala-|-Gly bond in repressor LexA.. In terms of biological role, represses a number of genes involved in the response to DNA damage (SOS response), including recA and lexA. In the presence of single-stranded DNA, RecA interacts with LexA causing an autocatalytic cleavage which disrupts the DNA-binding part of LexA, leading to derepression of the SOS regulon and eventually DNA repair. The protein is LexA repressor of Rhodopseudomonas palustris (strain BisA53).